Consider the following 424-residue polypeptide: Phosphomethylpyrimidine synthase (424 aa).

Residues N66, M95, Y124, H163, 185–187 (SRG), 226–229 (DGMR), and E265 contribute to the substrate site. H269 contacts Zn(2+). Substrate is bound at residue F292. H333 is a binding site for Zn(2+). The [4Fe-4S] cluster site is built by C408, C411, and C415.

It belongs to the ThiC family. Requires [4Fe-4S] cluster as cofactor.

It carries out the reaction 5-amino-1-(5-phospho-beta-D-ribosyl)imidazole + S-adenosyl-L-methionine = 4-amino-2-methyl-5-(phosphooxymethyl)pyrimidine + CO + 5'-deoxyadenosine + formate + L-methionine + 3 H(+). Its pathway is cofactor biosynthesis; thiamine diphosphate biosynthesis. In terms of biological role, catalyzes the synthesis of the hydroxymethylpyrimidine phosphate (HMP-P) moiety of thiamine from aminoimidazole ribotide (AIR) in a radical S-adenosyl-L-methionine (SAM)-dependent reaction. The sequence is that of Phosphomethylpyrimidine synthase from Thermotoga petrophila (strain ATCC BAA-488 / DSM 13995 / JCM 10881 / RKU-1).